A 176-amino-acid polypeptide reads, in one-letter code: Large ribosomal subunit protein uL6 (176 aa).

Positions 151–169 are enriched in basic and acidic residues; it reads RPPEPYKGRGIKYTDEHIQ. The segment at 151–176 is disordered; it reads RPPEPYKGRGIKYTDEHIQRKAGKTK.

Belongs to the universal ribosomal protein uL6 family. As to quaternary structure, part of the 50S ribosomal subunit.

Its function is as follows. This protein binds to the 23S rRNA, and is important in its secondary structure. It is located near the subunit interface in the base of the L7/L12 stalk, and near the tRNA binding site of the peptidyltransferase center. The chain is Large ribosomal subunit protein uL6 from Desulfosudis oleivorans (strain DSM 6200 / JCM 39069 / Hxd3) (Desulfococcus oleovorans).